Here is a 315-residue protein sequence, read N- to C-terminus: Methenyltetrahydromethanopterin cyclohydrolase (315 aa).

This sequence belongs to the MCH family.

It is found in the cytoplasm. It catalyses the reaction 5,10-methenyl-5,6,7,8-tetrahydromethanopterin + H2O = N(5)-formyl-5,6,7,8-tetrahydromethanopterin + H(+). The protein operates within one-carbon metabolism; methanogenesis from CO(2); 5,10-methenyl-5,6,7,8-tetrahydromethanopterin from CO(2): step 3/3. Functionally, catalyzes the reversible interconversion of 5-formyl-H(4)MPT to methenyl-H(4)MPT(+). This Methanoculleus marisnigri (strain ATCC 35101 / DSM 1498 / JR1) protein is Methenyltetrahydromethanopterin cyclohydrolase.